The primary structure comprises 103 residues: Co-chaperonin GroES (103 aa).

The protein belongs to the GroES chaperonin family. Heptamer of 7 subunits arranged in a ring. Interacts with the chaperonin GroEL.

Its subcellular location is the cytoplasm. In terms of biological role, together with the chaperonin GroEL, plays an essential role in assisting protein folding. The GroEL-GroES system forms a nano-cage that allows encapsulation of the non-native substrate proteins and provides a physical environment optimized to promote and accelerate protein folding. GroES binds to the apical surface of the GroEL ring, thereby capping the opening of the GroEL channel. The sequence is that of Co-chaperonin GroES from Thermosynechococcus vestitus (strain NIES-2133 / IAM M-273 / BP-1).